We begin with the raw amino-acid sequence, 195 residues long: Probable chorismate pyruvate-lyase (195 aa).

Residues arginine 79, leucine 117, and glutamate 180 each contribute to the substrate site.

The protein belongs to the UbiC family.

Its subcellular location is the cytoplasm. The catalysed reaction is chorismate = 4-hydroxybenzoate + pyruvate. It functions in the pathway cofactor biosynthesis; ubiquinone biosynthesis. Removes the pyruvyl group from chorismate, with concomitant aromatization of the ring, to provide 4-hydroxybenzoate (4HB) for the ubiquinone pathway. The polypeptide is Probable chorismate pyruvate-lyase (Ralstonia nicotianae (strain ATCC BAA-1114 / GMI1000) (Ralstonia solanacearum)).